A 278-amino-acid chain; its full sequence is Sulfur carrier protein FdhD (278 aa).

The active-site Cysteine persulfide intermediate is the C121. 260–265 (FCKPGR) lines the Mo-bis(molybdopterin guanine dinucleotide) pocket.

It belongs to the FdhD family.

Its subcellular location is the cytoplasm. Functionally, required for formate dehydrogenase (FDH) activity. Acts as a sulfur carrier protein that transfers sulfur from IscS to the molybdenum cofactor prior to its insertion into FDH. This chain is Sulfur carrier protein FdhD, found in Salmonella typhi.